The chain runs to 317 residues: UV DNA damage endonuclease (317 aa).

It belongs to the uve1/UvsE family.

Component in a DNA repair pathway. Removal of UV LIGHT damaged nucleotides. Recognizes pyrimidine dimers and cleave a phosphodiester bond immediately 5' to the lesion. This is UV DNA damage endonuclease from Bacillus cereus (strain ATCC 10987 / NRS 248).